The chain runs to 550 residues: Methionine--tRNA ligase (550 aa).

The 'HIGH' region signature appears at 13–23 (PYANGPLHFGH). Zn(2+)-binding residues include Cys-145, Cys-148, Cys-158, and Cys-161. Positions 331 to 335 (QFSKS) match the 'KMSKS' region motif. Lys-334 lines the ATP pocket.

Belongs to the class-I aminoacyl-tRNA synthetase family. MetG type 1 subfamily. As to quaternary structure, monomer. Zn(2+) serves as cofactor.

Its subcellular location is the cytoplasm. It carries out the reaction tRNA(Met) + L-methionine + ATP = L-methionyl-tRNA(Met) + AMP + diphosphate. Its function is as follows. Is required not only for elongation of protein synthesis but also for the initiation of all mRNA translation through initiator tRNA(fMet) aminoacylation. The sequence is that of Methionine--tRNA ligase from Chlamydia trachomatis serovar A (strain ATCC VR-571B / DSM 19440 / HAR-13).